A 275-amino-acid chain; its full sequence is Large ribosomal subunit protein uL2cz (275 aa).

2 disordered regions span residues 1–20 and 225–275; these read MAIH…AVDS and NPVD…RRSK.

This sequence belongs to the universal ribosomal protein uL2 family. In terms of assembly, part of the 50S ribosomal subunit.

The protein localises to the plastid. The protein resides in the chloroplast. The chain is Large ribosomal subunit protein uL2cz (rpl2-A) from Populus alba (White poplar).